The following is a 435-amino-acid chain: Probable alpha-galactosidase B (435 aa).

Residues 1–18 (MLTSLSLTALALLPSANA) form the signal peptide. An intrachain disulfide couples C41 to C73. N81 is a glycosylation site (N-linked (GlcNAc...) asparagine). A disulfide bond links C123 and C153. D151 (nucleophile) is an active-site residue. N158 and N176 each carry an N-linked (GlcNAc...) asparagine glycan. Substrate is bound at residue 221 to 225 (DWGQA). A glycan (N-linked (GlcNAc...) asparagine) is linked at N232. Catalysis depends on D243, which acts as the Proton donor. A glycan (N-linked (GlcNAc...) asparagine) is linked at N378.

This sequence belongs to the glycosyl hydrolase 27 family.

It localises to the secreted. It carries out the reaction Hydrolysis of terminal, non-reducing alpha-D-galactose residues in alpha-D-galactosides, including galactose oligosaccharides, galactomannans and galactolipids.. Hydrolyzes a variety of simple alpha-D-galactoside as well as more complex molecules such as oligosaccharides and polysaccharides. In Penicillium simplicissimum, this protein is Probable alpha-galactosidase B (agl1).